The chain runs to 205 residues: GTP cyclohydrolase-2 (205 aa).

49–53 (RLHSE) is a GTP binding site. Zn(2+) is bound by residues C54, C65, and C67. Residues Q70, 92 to 94 (EGR), and T114 contribute to the GTP site. D126 serves as the catalytic Proton acceptor. Residue R128 is the Nucleophile of the active site. 2 residues coordinate GTP: T149 and K154.

The protein belongs to the GTP cyclohydrolase II family. Requires Zn(2+) as cofactor.

It carries out the reaction GTP + 4 H2O = 2,5-diamino-6-hydroxy-4-(5-phosphoribosylamino)-pyrimidine + formate + 2 phosphate + 3 H(+). Its pathway is cofactor biosynthesis; riboflavin biosynthesis; 5-amino-6-(D-ribitylamino)uracil from GTP: step 1/4. Catalyzes the conversion of GTP to 2,5-diamino-6-ribosylamino-4(3H)-pyrimidinone 5'-phosphate (DARP), formate and pyrophosphate. This Pseudomonas putida (strain GB-1) protein is GTP cyclohydrolase-2.